The chain runs to 327 residues: 2-keto-3-deoxygluconate permease (327 aa).

Helical transmembrane passes span 10–30 (IPGG…TFSP), 42–62 (GMIT…GASI), 73–93 (KSGT…AIAS), 95–115 (IIPE…LALV), 139–159 (AGAF…IILG), 163–183 (IASF…VGFA), 199–219 (VQTL…LTVI), 224–244 (LLGI…LIIA), 254–274 (TAGI…VLIA), and 289–309 (SLVA…TSIW).

This sequence belongs to the KdgT transporter family.

The protein localises to the cell inner membrane. The catalysed reaction is 2-dehydro-3-deoxy-D-gluconate(in) + H(+)(in) = 2-dehydro-3-deoxy-D-gluconate(out) + H(+)(out). In terms of biological role, catalyzes the proton-dependent uptake of 2-keto-3-deoxygluconate (KDG) into the cell. The chain is 2-keto-3-deoxygluconate permease from Escherichia coli O157:H7.